A 598-amino-acid chain; its full sequence is Nuclear receptor subfamily 4 group A member 2 (598 aa).

Residues 1–22 (MPCVQAQYGSSPQGASPASQGY) form a disordered region. Residues 7-18 (QYGSSPQGASPA) are compositionally biased toward polar residues. Positions 260 to 335 (EGLCAVCGDN…VGMVKEVVRT (76 aa)) form a DNA-binding region, nuclear receptor. NR C4-type zinc fingers lie at residues 263-283 (CAVC…CEGC) and 299-318 (CLAN…CQYC). Residues 287-314 (FKRTVQKNAKYVCLANKNCPVDKRRRNR) carry the Bipartite nuclear localization signal (NLS1) motif. Positions 337 to 361 (SLKGRRGRLPSKPKSPQEPSPPSPP) are disordered. A Nuclear localization signal (NLS1) motif is present at residues 338–350 (LKGRRGRLPSKPK). A compositionally biased stretch (pro residues) spans 352–361 (PQEPSPPSPP). The region spanning 360–595 (PPVSLISALV…AIIDKLFLDT (236 aa)) is the NR LBD domain. Residues 443-452 (FLELFVLRLA) carry the nuclear export sequence (NES1) motif. The nuclear export sequence (NES2) signature appears at 568-577 (QGLQRIFYLK).

Belongs to the nuclear hormone receptor family. In terms of assembly, interacts with SFPQ, NCOR2, SIN3A and HADC1. The interaction with NCOR2 increases in the absence of PITX3. Interacts with PER2.

Its subcellular location is the cytoplasm. It is found in the nucleus. Transcriptional regulator which is important for the differentiation and maintenance of meso-diencephalic dopaminergic (mdDA) neurons during development. It is crucial for expression of a set of genes such as SLC6A3, SLC18A2, TH and DRD2 which are essential for development of mdDA neurons. In Pongo abelii (Sumatran orangutan), this protein is Nuclear receptor subfamily 4 group A member 2 (NR4A2).